A 220-amino-acid polypeptide reads, in one-letter code: Probable nicotinate-nucleotide adenylyltransferase (220 aa).

It belongs to the NadD family.

The catalysed reaction is nicotinate beta-D-ribonucleotide + ATP + H(+) = deamido-NAD(+) + diphosphate. It functions in the pathway cofactor biosynthesis; NAD(+) biosynthesis; deamido-NAD(+) from nicotinate D-ribonucleotide: step 1/1. Catalyzes the reversible adenylation of nicotinate mononucleotide (NaMN) to nicotinic acid adenine dinucleotide (NaAD). This is Probable nicotinate-nucleotide adenylyltransferase from Serratia proteamaculans (strain 568).